A 142-amino-acid polypeptide reads, in one-letter code: Struthiocalcin-2 (142 aa).

3 disulfides stabilise this stretch: Cys-6-Cys-17, Cys-34-Cys-138, and Cys-113-Cys-130. The region spanning Phe-13–Glu-139 is the C-type lectin domain. Residues Ser-62, Ser-66, and Ser-68 each carry the phosphoserine modification.

It localises to the secreted. The protein localises to the extracellular space. Its subcellular location is the extracellular matrix. The protein is Struthiocalcin-2 of Struthio camelus (Common ostrich).